Consider the following 424-residue polypeptide: Histidine--tRNA ligase (424 aa).

The protein belongs to the class-II aminoacyl-tRNA synthetase family. As to quaternary structure, homodimer.

It localises to the cytoplasm. The enzyme catalyses tRNA(His) + L-histidine + ATP = L-histidyl-tRNA(His) + AMP + diphosphate + H(+). The protein is Histidine--tRNA ligase of Marinomonas sp. (strain MWYL1).